Here is a 104-residue protein sequence, read N- to C-terminus: Circadian clock oscillator protein KaiB (104 aa).

This sequence belongs to the KaiB family. The KaiABC complex composition changes during the circadian cycle to control KaiC phosphorylation. Complexes KaiC(6), KaiA(2-4):KaiC(6), KaiB(6):KaiC(6) and KaiC(6):KaiB(6):KaiA(12) are among the most important forms, many form cooperatively. Undergoes a major conformational rearrangment; in the free state forms homotetramers as a dimer of dimers. When bound to the CI domain of KaiC switches to a monomeric thioredoxin-fold (KaiB(fs)). KaiB(fs) binds CikA, leading it to dephosphorylate phospho-RpaA.

Key component of the KaiABC oscillator complex, which constitutes the main circadian regulator in cyanobacteria. Complex composition changes during the circadian cycle to control KaiC phosphorylation. KaiA stimulates KaiC autophosphorylation, while KaiB sequesters KaiA, leading to KaiC autodephosphorylation. Phospho-Ser-431 KaiC accumulation triggers binding of KaiB to form the KaiB(6):KaiC(6) complex, leading to changes in output regulators CikA and SasA. KaiB switches to a thioredoxin-like fold (KaiB(fs)) when bound to KaiC. KaiB(6):KaiC(6) formation exposes a site for KaiA binding that sequesters KaiA from KaiC, making the KaiC(6):KaiB(6):KaiA(12) complex that results in KaiC autodephosphorylation. Functionally, a metamorphic protein which reversibly switches between an inactive tetrameric fold and a rare, thioredoxin-like monomeric fold (KaiB(fs)). KaiB(fs) binds phospho-KaiC, KaiA and CikA. KaiA and CikA compete for binding to KaiB(fs), and KaiB(fs) and SasA compete for binding to KaiC, thus the clock oscillator and output signal pathway are tightly coupled. This is Circadian clock oscillator protein KaiB from Acaryochloris marina (strain MBIC 11017).